Consider the following 302-residue polypeptide: S-adenosylmethionine sensor upstream of mTORC1 (302 aa).

Arg73, Gly132, and Asp150 together coordinate S-adenosyl-L-homocysteine. 7 residues coordinate S-adenosyl-L-methionine: Arg73, Gly132, Asp150, Leu151, Asp162, Phe163, and Ser196. 3 residues coordinate S-adenosyl-L-homocysteine: Asp162, Phe163, and Ser196.

It belongs to the BMT2/SAMTOR family.

In terms of biological role, S-adenosyl-L-methionine-binding protein. It is unclear whether this protein acts as a sensor of S-adenosyl-L-methionine to signal methionine sufficiency to mTORC1. Probably acts as a S-adenosyl-L-methionine-dependent methyltransferase. This chain is S-adenosylmethionine sensor upstream of mTORC1, found in Drosophila melanogaster (Fruit fly).